A 1027-amino-acid chain; its full sequence is MGVSLLASSSAFVTKPLLTQLVHLSPISLNFTVRRFKPFTCLSRYYTTNPYNMTSNFKTFNLDFLKPDLDERSYRFIELPNKLKALLIQDPKADKAAASLDVNIGAFEDPKNLPGLAHFCEHLLFMGSEKFPDENEYSSYLSKHGGSSNAYTASQNTNYFFEVNHQHLFGALDRFSGFFSCPLFNKDSTDKEINAVNSENKKNLQNDIWRIYQLDKSLTNTKHPYHKFSTGNIETLGTLPKENGLNVRDELLKFHKNFYSANLMKLCILGREDLDTLSDWTYDLFKDVANNGREVPLYAEPIMQPEHLQKIIQVRPVKDLKKLEISFTVPDMEEHWESKPPRILSHLIGHEGSGSLLAHLKKLGWANELSAGGHTVSKGNAFFAVDIDLTDNGLTHYRDVIVLIFQYIEMLKNSLPQKWIFNELQDISNATFKFKQAGSPSSTVSSLAKCLEKDYIPVSRILAMGLLTKYEPDLLTQYTDALVPENSRVTLISRSLETDSAEKWYGTAYKVVDYPADLIKNMKSPGLNPALTLPRPNEFVSTNFKVDKIDGIKPLDEPVLLLSDDVSKLWYKKDDRFWQPRGYIYLSFKLPHTHASIINSMLSTLYTQLANDALKDVQYDAACADLRISFNKTNQGLAITASGFNEKLIILLTRFLQGVNSFEPKKDRFEILKDKTIRHLKNLLYEVPYSQMSNYYNAIINERSWSTAEKLQVFEKLTFEQLINFIPTIYEGVYFETLIHGNIKHEEALEVDSLIKSLIPNNIHNLQVSNNRLRSYLLPKGKTFRYETALKDSQNVNSCIQHVTQLDVYSEDLSALSGLFAQLIHEPCFDTLRTKEQLGYVVFSSSLNNHGTANIRILIQSEHTTPYLEWRINNFYETFGQVLRDMPEEDFEKHKEALCNSLLQKFKNMAEESARYTAAIYLGDYNFTHRQKKAKLVANITKQQMIDFYENYIMSENASKLILHLKSQVENKELNENELDTAKYPTGQLIEDVGAFKSTLFVAPVRQPMKDFEISAPPKLNNSSESE.

Histidine 118 is a Zn(2+) binding site. The active-site Proton acceptor is glutamate 121. Histidine 122 and glutamate 199 together coordinate Zn(2+).

The protein belongs to the peptidase M16 family. Zn(2+) is required as a cofactor.

It localises to the membrane. With respect to regulation, inhibited by chelating agents like EDTA, TPEN and 1,1-phenanthroline, as well as NEM, free cysteine and DTT. Functionally, involved in the N-terminal endoproteolytic cleavage of the P2 precursor of the a-factor mating pheromone. Capable of proteolysing the established mammalian insulin-degrading enzymes (IDEs) substrates amyloid-beta peptide and insulin B-chain. This chain is A-factor-processing enzyme (STE23), found in Saccharomyces cerevisiae (strain ATCC 204508 / S288c) (Baker's yeast).